A 474-amino-acid polypeptide reads, in one-letter code: MEDLETIIGLEIHCQLNTKSKMFCSCSTDFRDNEPNTHTCPVCLGLPGSMPMVNKRAIEFALKVGKALNCTIRDESEFSRKNYFYPDLNKAYQITQYDKPLAEWGKLLIDGDNGEKEVRITRIHLEEDPGRSVHMGTTDRGKYTLVDYNRAGIPLIEIVTEPDLRSPKEARKFLNKLRATLEYLNVFDSEKEGSLRVDANISLKGSERVEVKNISSYKGVEKALTFEVTRQRNLLRRGQIVTRETRHFVEARGVTTSSRSKEEENDYRYFPEPDLLPLRVASWVDAIELPELPDARRERFISQYGVSPEHAKTLTGGLKLAEFYETVASEDPALAATWTADYLLGELNYRDFSIDAMPSDLFRELLTLIKSDTITDKSAVEILRLILDAVKDGKKPERPQEIVSRLGLAKTSGDQVTAMIQEVIAEQQAAIDDYYAGKMQALNFLVGQVMKKCRGRADPGHLNTLLKEILDKKV.

The protein belongs to the GatB/GatE family. GatB subfamily. In terms of assembly, heterotrimer of A, B and C subunits.

The enzyme catalyses L-glutamyl-tRNA(Gln) + L-glutamine + ATP + H2O = L-glutaminyl-tRNA(Gln) + L-glutamate + ADP + phosphate + H(+). It carries out the reaction L-aspartyl-tRNA(Asn) + L-glutamine + ATP + H2O = L-asparaginyl-tRNA(Asn) + L-glutamate + ADP + phosphate + 2 H(+). Functionally, allows the formation of correctly charged Asn-tRNA(Asn) or Gln-tRNA(Gln) through the transamidation of misacylated Asp-tRNA(Asn) or Glu-tRNA(Gln) in organisms which lack either or both of asparaginyl-tRNA or glutaminyl-tRNA synthetases. The reaction takes place in the presence of glutamine and ATP through an activated phospho-Asp-tRNA(Asn) or phospho-Glu-tRNA(Gln). The protein is Aspartyl/glutamyl-tRNA(Asn/Gln) amidotransferase subunit B of Methanospirillum hungatei JF-1 (strain ATCC 27890 / DSM 864 / NBRC 100397 / JF-1).